The chain runs to 1118 residues: Protein argonaute 1B (1118 aa).

2 disordered regions span residues 1–175 (MALQ…SRTV) and 188–246 (APMV…RFPL). A compositionally biased stretch (basic residues) spans 10–24 (PHHHQVPIMVKKKRT). A compositionally biased stretch (low complexity) spans 25–35 (GSGSTGESSGE). 3 stretches are compositionally biased toward gly residues: residues 54-92 (QHGG…HHPG), 100-110 (GRGGPGSHHPG), and 118-128 (GRGGSGSHHPG). 2 stretches are compositionally biased toward low complexity: residues 148-157 (RGGMPQPYYG) and 193-219 (PTPS…QFQQ). Polar residues predominate over residues 220–241 (LATRDQSSTSQAIQIAPPSSKS). The PAZ domain occupies 457-570 (PVIDFVAQLL…LPMEVCKIVE (114 aa)). A Piwi domain is found at 746-1067 (LLIVILPDNN…AAFRARFYME (322 aa)).

Belongs to the argonaute family. Ago subfamily.

Probably involved in the RNA silencing pathway. May bind to short RNAs such as microRNAs (miRNAs) or short interfering RNAs (siRNAs), and represses the translation of mRNAs which are complementary to them. This chain is Protein argonaute 1B (AGO1B), found in Oryza sativa subsp. japonica (Rice).